The primary structure comprises 250 residues: Cellulose biosynthesis protein BcsQ (250 aa).

9–16 (VRGGVGTT) provides a ligand contact to ATP.

This sequence belongs to the BcsQ family.

The protein localises to the cytoplasm. Functionally, essential for cellulose biosynthesis. May play a role in subcellular localization of an active cellulose biosynthesis apparatus at the bacterial cell pole. This chain is Cellulose biosynthesis protein BcsQ (bcsQ), found in Salmonella typhi.